The sequence spans 243 residues: uncharacterized protein (243 aa).

A disordered region spans residues 157–181 (SEETKEQPDATTSEKSRSPECPKTT).

This is an uncharacterized protein from Rattus norvegicus (Rat).